A 173-amino-acid chain; its full sequence is 5-hydroxymethyl-dUMP N-hydrolase (173 aa).

A2 is subject to N-acetylalanine. Residue G16 participates in 5-hydroxymethyl-dUMP binding. Residue S17 is modified to Phosphoserine. Residues I18, R19, G20, S87, G89, and E93 each coordinate 5-hydroxymethyl-dUMP. The residue at position 87 (S87) is a Phosphoserine. 4 positions are modified to phosphoserine: S112, S117, S127, and S158. Residue S117 coordinates 5-hydroxymethyl-dUMP.

This sequence belongs to the 2'-deoxynucleoside 5'-phosphate N-hydrolase 1 family. In terms of assembly, monomer and homodimer.

The protein localises to the cytoplasm. Its subcellular location is the nucleus. It catalyses the reaction 5-hydroxymethyl-dUMP + H2O = 5-hydroxymethyluracil + 2-deoxy-D-ribose 5-phosphate. Functionally, part of a nucleotide salvage pathway that eliminates epigenetically modified 5-hydroxymethyl-dCMP (hmdCMP) in a two-step process entailing deamination to cytotoxic 5-hydroxymethyl-dUMP (hmdUMP), followed by its hydrolysis into 5-hydroxymethyluracil (hmU) and 2-deoxy-D-ribose 5-phosphate (deoxyribosephosphate). Catalyzes the second step in that pathway, the hydrolysis of the N-glycosidic bond in hmdUMP, degrading this cytotoxic nucleotide to avoid its genomic integration. The sequence is that of 5-hydroxymethyl-dUMP N-hydrolase from Mus musculus (Mouse).